Reading from the N-terminus, the 383-residue chain is NIPA-like protein 2 (383 aa).

Residues asparagine 23 and asparagine 33 are each glycosylated (N-linked (GlcNAc...) asparagine). Transmembrane regions (helical) follow at residues 46–66 (IHLF…ISLN), 88–108 (VLWW…FAAY), 110–130 (FAPI…SAII), 144–164 (LLGT…APNI), 177–197 (LVGW…CILL), 209–229 (VILL…VKAV), and 243–263 (LTYP…VFQV). An N-linked (GlcNAc...) asparagine glycan is attached at asparagine 274. A run of 2 helical transmembrane segments spans residues 278–298 (VVPV…IIFY) and 306–326 (FLTV…VFLV). A disordered region spans residues 355–383 (QPDSHSLSYGTLPDGSDSTKSQSGEKKEV).

It belongs to the NIPA family.

The protein localises to the membrane. This Homo sapiens (Human) protein is NIPA-like protein 2 (NIPAL2).